The chain runs to 289 residues: Undecaprenyl-diphosphatase (289 aa).

8 consecutive transmembrane segments (helical) span residues 23 to 43 (LFLGIIQGLTEFFPISSTAHL), 56 to 76 (GVAVTASLQLGSIIALIAYFW), 104 to 124 (SAIVLGTLPIVFAGMLIKLFW), 135 to 155 (IPAIAVVSIVMALLLLIAENV), 165 to 185 (LSFWDGQIIGFSQVLALIPGV), 210 to 230 (FLLGIPAITLAGLVELKQAFG), 235 to 255 (VDVFPLLLGITSSAISSWIAI), and 269 to 289 (IFITYRFLFGTLLLFWYYLAF).

The protein belongs to the UppP family.

It localises to the cell inner membrane. The catalysed reaction is di-trans,octa-cis-undecaprenyl diphosphate + H2O = di-trans,octa-cis-undecaprenyl phosphate + phosphate + H(+). Functionally, catalyzes the dephosphorylation of undecaprenyl diphosphate (UPP). Confers resistance to bacitracin. This chain is Undecaprenyl-diphosphatase, found in Prochlorococcus marinus (strain SARG / CCMP1375 / SS120).